We begin with the raw amino-acid sequence, 485 residues long: Benzaldehyde dehydrogenase YfmT (485 aa).

Residue 231 to 236 (GSTKVG) participates in NAD(+) binding. Residues E253 and C287 contribute to the active site.

Belongs to the aldehyde dehydrogenase family.

It catalyses the reaction benzaldehyde + NAD(+) + H2O = benzoate + NADH + 2 H(+). The catalysed reaction is vanillin + NAD(+) + H2O = vanillate + NADH + 2 H(+). In terms of biological role, a benzaldehyde dehydrogenase able to act on substrates with 3- and 4-hydroxy and methoxy substitutions; converts vanillin (4-hydroxy-3-methoxybenzaldehyde) to vanillic acid in vitro. The physiological substrate is unknown. This is Benzaldehyde dehydrogenase YfmT (yfmT) from Bacillus subtilis (strain 168).